The sequence spans 103 residues: Flagellar hook-basal body complex protein FliE (103 aa).

This sequence belongs to the FliE family.

The protein localises to the bacterial flagellum basal body. This Yersinia pestis protein is Flagellar hook-basal body complex protein FliE.